Consider the following 486-residue polypeptide: Probable glucan endo-1,3-beta-glucosidase eglC (486 aa).

Positions 1–18 (MQLTQLLALALSLATSEA) are cleaved as a signal peptide. The N-linked (GlcNAc...) asparagine glycan is linked to Asn84. The active-site Proton donor is the Glu128. N-linked (GlcNAc...) asparagine glycosylation occurs at Asn183. Glu239 serves as the catalytic Nucleophile. Residues Asn315, Asn386, Asn396, and Asn404 are each glycosylated (N-linked (GlcNAc...) asparagine). Positions 330 to 458 (AAAGGVAGGS…SSGAASPSST (129 aa)) are disordered. Low complexity-rich tracts occupy residues 341 to 404 (GSAS…HGSN) and 413 to 424 (SVSNVSPSKSSS). The segment covering 430-442 (AATSMGASPSSVG) has biased composition (polar residues). The segment covering 445–458 (GPSKSSGAASPSST) has biased composition (low complexity). Gly463 carries the GPI-anchor amidated glycine lipid modification. Positions 464–486 (AATSVSAPVVHVVLLALMMVIAA) are cleaved as a propeptide — removed in mature form.

This sequence belongs to the glycosyl hydrolase 17 family. In terms of processing, the GPI-anchor is attached to the protein in the endoplasmic reticulum and serves to target the protein to the cell surface. There, the glucosamine-inositol phospholipid moiety is cleaved off and the GPI-modified mannoprotein is covalently attached via its lipidless GPI glycan remnant to the 1,6-beta-glucan of the outer cell wall layer.

It localises to the cell membrane. The protein resides in the secreted. Its subcellular location is the cell wall. It catalyses the reaction Hydrolysis of (1-&gt;3)-beta-D-glucosidic linkages in (1-&gt;3)-beta-D-glucans.. Functionally, glucanases play a role in cell expansion during growth, in cell-cell fusion during mating, and in spore release during sporulation. This enzyme may be involved in beta-glucan degradation and also function biosynthetically as a transglycosylase. This Aspergillus terreus (strain NIH 2624 / FGSC A1156) protein is Probable glucan endo-1,3-beta-glucosidase eglC (eglC).